Here is a 706-residue protein sequence, read N- to C-terminus: Dihydroxyacetone synthase (706 aa).

Residues His-76 and Gly-126 to Leu-128 each bind thiamine diphosphate. Asp-167, Asn-197, and Val-199 together coordinate Mg(2+). Asn-197 contacts thiamine diphosphate. Thiamine diphosphate contacts are provided by His-273, Glu-431, and Phe-459. The active-site Proton donor is the Glu-431. A Microbody targeting signal motif is present at residues Asn-704 to Leu-706.

The protein belongs to the transketolase family. Requires Mg(2+) as cofactor. Ca(2+) serves as cofactor. The cofactor is Mn(2+). Co(2+) is required as a cofactor. It depends on thiamine diphosphate as a cofactor.

It is found in the peroxisome. The catalysed reaction is D-xylulose 5-phosphate + formaldehyde = dihydroxyacetone + D-glyceraldehyde 3-phosphate. Functionally, involved in assimilation of formaldehyde. The polypeptide is Dihydroxyacetone synthase (DAS1) (Candida boidinii (Yeast)).